Here is a 430-residue protein sequence, read N- to C-terminus: Rosmarinate synthase (430 aa).

The active-site Proton acceptor is the histidine 152. Residues 178–210 (TPLPHFDRSSLSARNPPQPQFSHAEYQPPPTLE) form a disordered region. Aspartate 377 serves as the catalytic Proton acceptor.

Belongs to the plant acyltransferase family.

It catalyses the reaction (2R)-3-(3,4-dihydroxyphenyl)lactate + (E)-caffeoyl-CoA = (R)-rosmarinate + CoA. In terms of biological role, involved in the biosynthesis of rosmarinic acid, a compound with antiviral, antimicrobial and anti-inflammatory activities. Can use 4-coumaroyl- and caffeoyl-CoA as hydroxycinnamoyl donors and 4-Hydroxyphenyllactate and 3.4-Dihydroxyphenyllactate, but not shikimate or quinate, as hydroxycinnamoyl acceptors. Can also putatively catalyze amide formation with D-amino acids as acceptors. This Plectranthus scutellarioides (Coleus) protein is Rosmarinate synthase (RAS).